Consider the following 304-residue polypeptide: Ribosomal RNA small subunit methyltransferase H (304 aa).

S-adenosyl-L-methionine-binding positions include 36–38 (CGH), aspartate 55, phenylalanine 81, aspartate 102, and glutamine 109.

It belongs to the methyltransferase superfamily. RsmH family.

The protein localises to the cytoplasm. It carries out the reaction cytidine(1402) in 16S rRNA + S-adenosyl-L-methionine = N(4)-methylcytidine(1402) in 16S rRNA + S-adenosyl-L-homocysteine + H(+). Specifically methylates the N4 position of cytidine in position 1402 (C1402) of 16S rRNA. This is Ribosomal RNA small subunit methyltransferase H from Onion yellows phytoplasma (strain OY-M).